Here is a 191-residue protein sequence, read N- to C-terminus: Peptidyl-tRNA hydrolase (191 aa).

Tyrosine 17 contacts tRNA. Histidine 22 acts as the Proton acceptor in catalysis. TRNA is bound by residues tyrosine 68, asparagine 70, and asparagine 116.

Belongs to the PTH family. Monomer.

The protein resides in the cytoplasm. The enzyme catalyses an N-acyl-L-alpha-aminoacyl-tRNA + H2O = an N-acyl-L-amino acid + a tRNA + H(+). Hydrolyzes ribosome-free peptidyl-tRNAs (with 1 or more amino acids incorporated), which drop off the ribosome during protein synthesis, or as a result of ribosome stalling. In terms of biological role, catalyzes the release of premature peptidyl moieties from peptidyl-tRNA molecules trapped in stalled 50S ribosomal subunits, and thus maintains levels of free tRNAs and 50S ribosomes. This chain is Peptidyl-tRNA hydrolase, found in Mycobacterium marinum (strain ATCC BAA-535 / M).